A 163-amino-acid polypeptide reads, in one-letter code: NADH-quinone oxidoreductase subunit I (163 aa).

4Fe-4S ferredoxin-type domains follow at residues 53–83 and 94–123; these read LRRY…IEAG and VRYD…EGPN. 8 residues coordinate [4Fe-4S] cluster: cysteine 63, cysteine 66, cysteine 69, cysteine 73, cysteine 103, cysteine 106, cysteine 109, and cysteine 113.

This sequence belongs to the complex I 23 kDa subunit family. In terms of assembly, NDH-1 is composed of 14 different subunits. Subunits NuoA, H, J, K, L, M, N constitute the membrane sector of the complex. [4Fe-4S] cluster is required as a cofactor.

It is found in the cell inner membrane. It carries out the reaction a quinone + NADH + 5 H(+)(in) = a quinol + NAD(+) + 4 H(+)(out). In terms of biological role, NDH-1 shuttles electrons from NADH, via FMN and iron-sulfur (Fe-S) centers, to quinones in the respiratory chain. The immediate electron acceptor for the enzyme in this species is believed to be ubiquinone. Couples the redox reaction to proton translocation (for every two electrons transferred, four hydrogen ions are translocated across the cytoplasmic membrane), and thus conserves the redox energy in a proton gradient. In Brucella suis (strain ATCC 23445 / NCTC 10510), this protein is NADH-quinone oxidoreductase subunit I.